The sequence spans 139 residues: Ribonuclease P/MRP protein subunit POP5 (139 aa).

The protein belongs to the eukaryotic/archaeal RNase P protein component 2 family.

Its subcellular location is the nucleus. The enzyme catalyses Endonucleolytic cleavage of RNA, removing 5'-extranucleotides from tRNA precursor.. Its function is as follows. Component of ribonuclease P, a protein complex that generates mature tRNA molecules by cleaving their 5'-ends. Also a component of RNase MRP, which cleaves pre-rRNA sequences. This chain is Ribonuclease P/MRP protein subunit POP5, found in Schizosaccharomyces pombe (strain 972 / ATCC 24843) (Fission yeast).